We begin with the raw amino-acid sequence, 446 residues long: 3-phosphoshikimate 1-carboxyvinyltransferase (446 aa).

The tract at residues 1 to 20 (MSTWPAPSTATPVHATVTVP) is disordered. 3-phosphoshikimate contacts are provided by Lys23, Ser24, and Arg28. Lys23 contacts phosphoenolpyruvate. 2 residues coordinate phosphoenolpyruvate: Gly100 and Arg128. 3-phosphoshikimate contacts are provided by Ser171, Ser172, Gln173, Ser200, Glu315, and His344. Position 173 (Gln173) interacts with phosphoenolpyruvate. Glu315 serves as the catalytic Proton acceptor. Phosphoenolpyruvate is bound by residues Arg348, Arg389, and Lys414.

This sequence belongs to the EPSP synthase family. As to quaternary structure, monomer.

The protein resides in the cytoplasm. It catalyses the reaction 3-phosphoshikimate + phosphoenolpyruvate = 5-O-(1-carboxyvinyl)-3-phosphoshikimate + phosphate. It functions in the pathway metabolic intermediate biosynthesis; chorismate biosynthesis; chorismate from D-erythrose 4-phosphate and phosphoenolpyruvate: step 6/7. Catalyzes the transfer of the enolpyruvyl moiety of phosphoenolpyruvate (PEP) to the 5-hydroxyl of shikimate-3-phosphate (S3P) to produce enolpyruvyl shikimate-3-phosphate and inorganic phosphate. The sequence is that of 3-phosphoshikimate 1-carboxyvinyltransferase from Mycolicibacterium vanbaalenii (strain DSM 7251 / JCM 13017 / BCRC 16820 / KCTC 9966 / NRRL B-24157 / PYR-1) (Mycobacterium vanbaalenii).